A 345-amino-acid chain; its full sequence is Protein RecA (345 aa).

65–72 (GPESSGKT) is an ATP binding site.

Belongs to the RecA family.

It is found in the cytoplasm. Functionally, can catalyze the hydrolysis of ATP in the presence of single-stranded DNA, the ATP-dependent uptake of single-stranded DNA by duplex DNA, and the ATP-dependent hybridization of homologous single-stranded DNAs. It interacts with LexA causing its activation and leading to its autocatalytic cleavage. In Hahella chejuensis (strain KCTC 2396), this protein is Protein RecA.